Consider the following 911-residue polypeptide: DNA mismatch repair protein MutS (911 aa).

Residues 1–10 (MDNKTDHKND) show a composition bias toward basic and acidic residues. Residues 1–24 (MDNKTDHKNDLNSQPVPSSAPHKE) are disordered. 662–669 (GPNMGGKS) is an ATP binding site.

Belongs to the DNA mismatch repair MutS family.

This protein is involved in the repair of mismatches in DNA. It is possible that it carries out the mismatch recognition step. This protein has a weak ATPase activity. The chain is DNA mismatch repair protein MutS from Bartonella quintana (strain Toulouse) (Rochalimaea quintana).